A 300-amino-acid chain; its full sequence is Acetylglutamate kinase (300 aa).

Substrate is bound by residues 72-73, Arg-94, and Asn-197; that span reads GG.

This sequence belongs to the acetylglutamate kinase family. ArgB subfamily.

The protein localises to the cytoplasm. It carries out the reaction N-acetyl-L-glutamate + ATP = N-acetyl-L-glutamyl 5-phosphate + ADP. Its pathway is amino-acid biosynthesis; L-arginine biosynthesis; N(2)-acetyl-L-ornithine from L-glutamate: step 2/4. In terms of biological role, catalyzes the ATP-dependent phosphorylation of N-acetyl-L-glutamate. The protein is Acetylglutamate kinase of Azoarcus sp. (strain BH72).